Consider the following 423-residue polypeptide: Histidine--tRNA ligase (423 aa).

This sequence belongs to the class-II aminoacyl-tRNA synthetase family. As to quaternary structure, homodimer.

Its subcellular location is the cytoplasm. The enzyme catalyses tRNA(His) + L-histidine + ATP = L-histidyl-tRNA(His) + AMP + diphosphate + H(+). This is Histidine--tRNA ligase from Laribacter hongkongensis (strain HLHK9).